Consider the following 109-residue polypeptide: Nucleoid-associated protein ECA1177 (109 aa).

The protein belongs to the YbaB/EbfC family. As to quaternary structure, homodimer.

Its subcellular location is the cytoplasm. The protein resides in the nucleoid. Binds to DNA and alters its conformation. May be involved in regulation of gene expression, nucleoid organization and DNA protection. The protein is Nucleoid-associated protein ECA1177 of Pectobacterium atrosepticum (strain SCRI 1043 / ATCC BAA-672) (Erwinia carotovora subsp. atroseptica).